The sequence spans 85 residues: Acylphosphatase (85 aa).

One can recognise an Acylphosphatase-like domain in the interval 3–85; it reads AARFVVSGVV…PARFRRLKTL (83 aa). Active-site residues include Arg-18 and Asn-36. Positions 66-85 are disordered; the sequence is PPRSRRSRARPARFRRLKTL.

It belongs to the acylphosphatase family.

The catalysed reaction is an acyl phosphate + H2O = a carboxylate + phosphate + H(+). The chain is Acylphosphatase (acyP) from Xanthomonas axonopodis pv. citri (strain 306).